The chain runs to 215 residues: Probable transaldolase (215 aa).

K83 (schiff-base intermediate with substrate) is an active-site residue.

This sequence belongs to the transaldolase family. Type 3B subfamily.

Its subcellular location is the cytoplasm. The enzyme catalyses D-sedoheptulose 7-phosphate + D-glyceraldehyde 3-phosphate = D-erythrose 4-phosphate + beta-D-fructose 6-phosphate. It participates in carbohydrate degradation; pentose phosphate pathway; D-glyceraldehyde 3-phosphate and beta-D-fructose 6-phosphate from D-ribose 5-phosphate and D-xylulose 5-phosphate (non-oxidative stage): step 2/3. Transaldolase is important for the balance of metabolites in the pentose-phosphate pathway. This Streptococcus agalactiae serotype III (strain NEM316) protein is Probable transaldolase.